Consider the following 83-residue polypeptide: Putative defensin-like protein 67 (83 aa).

An N-terminal signal peptide occupies residues 1–24; it reads MGSSKLMVTCIVVAMLTISCDILS. Cystine bridges form between Cys-38–Cys-82, Cys-42–Cys-65, Cys-51–Cys-80, and Cys-55–Cys-81.

It belongs to the DEFL family.

Its subcellular location is the secreted. This is Putative defensin-like protein 67 from Arabidopsis thaliana (Mouse-ear cress).